The following is a 383-amino-acid chain: Delta(12)-fatty-acid desaturase FAD2 (383 aa).

The next 2 helical transmembrane spans lie at 56 to 76 (VVYD…YFHL) and 84 to 104 (VAWP…WVIA). The Histidine box-1 motif lies at 105–109 (HECGH). The chain crosses the membrane as a helical span at residues 117-137 (LLDDIVGLVLHSCLLVPYFSW). Residues 141 to 145 (HRRHH) carry the Histidine box-2 motif. Transmembrane regions (helical) follow at residues 179–199 (LFTL…FNVS), 225–245 (IYIS…LAAA), and 249–269 (AWVI…LVMI). Positions 315–319 (HVAHH) match the Histidine box-3 motif.

This sequence belongs to the fatty acid desaturase type 1 family. As to expression, expressed in leaves and seeds.

The protein resides in the endoplasmic reticulum membrane. It catalyses the reaction (9Z)-octadecenoyl-CoA + 2 Fe(II)-[cytochrome b5] + O2 + 2 H(+) = (9Z,12Z)-octadecadienoyl-CoA + 2 Fe(III)-[cytochrome b5] + 2 H2O. It carries out the reaction (9Z)-hexadecenoyl-CoA + 2 Fe(II)-[cytochrome b5] + O2 + 2 H(+) = (9Z,12Z)-hexadecadienoyl-CoA + 2 Fe(III)-[cytochrome b5] + 2 H2O. Its pathway is lipid metabolism; polyunsaturated fatty acid biosynthesis. In terms of biological role, catalyzes the desaturation of oleic acid (18:1(9Z)) to linoleic acid (18:2(9Z,12Z)). This chain is Delta(12)-fatty-acid desaturase FAD2, found in Vernicia fordii (Tung).